The chain runs to 226 residues: Transcriptional regulatory protein DpiA (226 aa).

Residues 6–122 enclose the Response regulatory domain; sequence TLLIVEDETP…RLGQTLTRFR (117 aa). D57 is subject to 4-aspartylphosphate. A DNA-binding region (H-T-H motif) is located at residues 180–199; that stretch reads AETVAQALTISRTTARRYLE.

In terms of processing, phosphorylated and activated by DpiB.

Its subcellular location is the cytoplasm. Member of the two-component regulatory system DpiA/DpiB, which is essential for expression of citrate-specific fermentation genes and genes involved in plasmid inheritance. Could be involved in response to both the presence of citrate and external redox conditions. In Escherichia coli O157:H7, this protein is Transcriptional regulatory protein DpiA (dpiA).